The primary structure comprises 286 residues: Transcription factor bHLH137 (286 aa).

Residues 63–84 show a composition bias toward polar residues; it reads SGSEKLANTTKTATTGSSSCDQ. Residues 63–149 form a disordered region; it reads SGSEKLANTT…RGQATDSHSL (87 aa). Residues 142–192 enclose the bHLH domain; it reads QATDSHSLAERVRREKISERMRTLQNLVPGCDKVTGKALMLDEIINYVQTL.

Homodimer.

Its subcellular location is the nucleus. The sequence is that of Transcription factor bHLH137 (BHLH137) from Arabidopsis thaliana (Mouse-ear cress).